Here is a 147-residue protein sequence, read N- to C-terminus: Deoxyuridine 5'-triphosphate nucleotidohydrolase (147 aa).

Substrate is bound by residues 67-69, N80, and 84-86; these read RSG and LID.

Belongs to the dUTPase family. Requires Mg(2+) as cofactor.

The enzyme catalyses dUTP + H2O = dUMP + diphosphate + H(+). The protein operates within pyrimidine metabolism; dUMP biosynthesis; dUMP from dCTP (dUTP route): step 2/2. Its function is as follows. This enzyme is involved in nucleotide metabolism: it produces dUMP, the immediate precursor of thymidine nucleotides and it decreases the intracellular concentration of dUTP so that uracil cannot be incorporated into DNA. This chain is Deoxyuridine 5'-triphosphate nucleotidohydrolase, found in Gloeobacter violaceus (strain ATCC 29082 / PCC 7421).